The sequence spans 420 residues: Dynein axonemal assembly factor 4 (420 aa).

Residues Val-3–Ser-87 enclose the CS domain. Residues Glu-7–Ser-103 form a mediates interaction with ESR1 and STUB1 region. Over residues Cys-165 to Ala-192 the composition is skewed to basic and acidic residues. The segment at Cys-165 to Arg-212 is disordered. 3 TPR repeats span residues Pro-288 to Ile-321, Val-323 to Pro-355, and Met-364 to Asn-397.

In terms of assembly, interacts with ZMYND10. Interacts with STUB1. Interacts with ESR1 and ESR2. Interacts with DNAAF2. Interacts with CCT3, CCT4, CCT5 and CCT8. Interacts with DNAAF6/PIH1D3.

The protein resides in the nucleus. The protein localises to the cytoplasm. Its subcellular location is the cell projection. It is found in the neuron projection. It localises to the dynein axonemal particle. Its function is as follows. Involved in neuronal migration during development of the cerebral neocortex. May regulate the stability and proteasomal degradation of the estrogen receptors that play an important role in neuronal differentiation, survival and plasticity. Axonemal dynein assembly factor required for ciliary motility. The sequence is that of Dynein axonemal assembly factor 4 from Rattus norvegicus (Rat).